The primary structure comprises 224 residues: Ribose-5-phosphate isomerase A (224 aa).

Substrate-binding positions include 26 to 29 (TGST), 82 to 85 (DGAD), and 95 to 98 (KGGG). The active-site Proton acceptor is the Glu-104. Lys-122 contributes to the substrate binding site.

Belongs to the ribose 5-phosphate isomerase family. As to quaternary structure, homodimer.

It catalyses the reaction aldehydo-D-ribose 5-phosphate = D-ribulose 5-phosphate. Its pathway is carbohydrate degradation; pentose phosphate pathway; D-ribose 5-phosphate from D-ribulose 5-phosphate (non-oxidative stage): step 1/1. In terms of biological role, catalyzes the reversible conversion of ribose-5-phosphate to ribulose 5-phosphate. The sequence is that of Ribose-5-phosphate isomerase A from Lactococcus lactis subsp. cremoris (strain MG1363).